The sequence spans 82 residues: Acyl carrier protein (82 aa).

Residues 3–81 (LSREKVLESI…DAVDFIIAAK (79 aa)) enclose the Carrier domain. S41 is modified (O-(pantetheine 4'-phosphoryl)serine).

The protein belongs to the acyl carrier protein (ACP) family. 4'-phosphopantetheine is transferred from CoA to a specific serine of apo-ACP by AcpS. This modification is essential for activity because fatty acids are bound in thioester linkage to the sulfhydryl of the prosthetic group.

Its subcellular location is the cytoplasm. It participates in lipid metabolism; fatty acid biosynthesis. In terms of biological role, carrier of the growing fatty acid chain in fatty acid biosynthesis. The polypeptide is Acyl carrier protein (Tropheryma whipplei (strain Twist) (Whipple's bacillus)).